A 318-amino-acid polypeptide reads, in one-letter code: Pantothenate kinase (318 aa).

Residue 96 to 103 (GSVAVGKS) coordinates ATP.

The protein belongs to the prokaryotic pantothenate kinase family.

The protein resides in the cytoplasm. The enzyme catalyses (R)-pantothenate + ATP = (R)-4'-phosphopantothenate + ADP + H(+). It functions in the pathway cofactor biosynthesis; coenzyme A biosynthesis; CoA from (R)-pantothenate: step 1/5. The polypeptide is Pantothenate kinase (Rhodopseudomonas palustris (strain ATCC BAA-98 / CGA009)).